The sequence spans 256 residues: Signal peptidase I (256 aa).

Catalysis depends on residues serine 32 and lysine 75.

This sequence belongs to the peptidase S26 family.

The catalysed reaction is Cleavage of hydrophobic, N-terminal signal or leader sequences from secreted and periplasmic proteins.. This is Signal peptidase I (lepB) from Aquifex aeolicus (strain VF5).